A 349-amino-acid chain; its full sequence is Small ribosomal subunit biogenesis GTPase RsgA 2 (349 aa).

The 156-residue stretch at 97–252 (AEQLIATNVD…IIDTPGMREL (156 aa)) folds into the CP-type G domain. GTP contacts are provided by residues 142 to 145 (TKAD) and 194 to 202 (GSSGVGKST). 4 residues coordinate Zn(2+): C275, C280, H282, and C288.

Belongs to the TRAFAC class YlqF/YawG GTPase family. RsgA subfamily. Monomer. Associates with 30S ribosomal subunit, binds 16S rRNA. Zn(2+) is required as a cofactor.

It localises to the cytoplasm. In terms of biological role, one of several proteins that assist in the late maturation steps of the functional core of the 30S ribosomal subunit. Helps release RbfA from mature subunits. May play a role in the assembly of ribosomal proteins into the subunit. Circularly permuted GTPase that catalyzes slow GTP hydrolysis, GTPase activity is stimulated by the 30S ribosomal subunit. The polypeptide is Small ribosomal subunit biogenesis GTPase RsgA 2 (Vibrio vulnificus (strain CMCP6)).